Here is a 120-residue protein sequence, read N- to C-terminus: Large ribosomal subunit protein uL18 (120 aa).

Positions 1–20 (MKSTRKSATQRRHRRLRRHL) are enriched in basic residues. Positions 1 to 26 (MKSTRKSATQRRHRRLRRHLSGTSER) are disordered.

This sequence belongs to the universal ribosomal protein uL18 family. In terms of assembly, part of the 50S ribosomal subunit; part of the 5S rRNA/L5/L18/L25 subcomplex. Contacts the 5S and 23S rRNAs.

In terms of biological role, this is one of the proteins that bind and probably mediate the attachment of the 5S RNA into the large ribosomal subunit, where it forms part of the central protuberance. This chain is Large ribosomal subunit protein uL18, found in Synechocystis sp. (strain ATCC 27184 / PCC 6803 / Kazusa).